A 480-amino-acid chain; its full sequence is Aspartyl/glutamyl-tRNA(Asn/Gln) amidotransferase subunit B (480 aa).

It belongs to the GatB/GatE family. GatB subfamily. As to quaternary structure, heterotrimer of A, B and C subunits.

The catalysed reaction is L-glutamyl-tRNA(Gln) + L-glutamine + ATP + H2O = L-glutaminyl-tRNA(Gln) + L-glutamate + ADP + phosphate + H(+). It catalyses the reaction L-aspartyl-tRNA(Asn) + L-glutamine + ATP + H2O = L-asparaginyl-tRNA(Asn) + L-glutamate + ADP + phosphate + 2 H(+). Functionally, allows the formation of correctly charged Asn-tRNA(Asn) or Gln-tRNA(Gln) through the transamidation of misacylated Asp-tRNA(Asn) or Glu-tRNA(Gln) in organisms which lack either or both of asparaginyl-tRNA or glutaminyl-tRNA synthetases. The reaction takes place in the presence of glutamine and ATP through an activated phospho-Asp-tRNA(Asn) or phospho-Glu-tRNA(Gln). The polypeptide is Aspartyl/glutamyl-tRNA(Asn/Gln) amidotransferase subunit B (Caldicellulosiruptor saccharolyticus (strain ATCC 43494 / DSM 8903 / Tp8T 6331)).